The chain runs to 189 residues: Elongation factor P (189 aa).

The residue at position 34 (K34) is an N6-(3,6-diaminohexanoyl)-5-hydroxylysine.

The protein belongs to the elongation factor P family. Post-translationally, may be beta-lysylated on the epsilon-amino group of Lys-34 by the combined action of EpmA and EpmB, and then hydroxylated on the C5 position of the same residue by EpmC (if this protein is present). Lysylation is critical for the stimulatory effect of EF-P on peptide-bond formation. The lysylation moiety may extend toward the peptidyltransferase center and stabilize the terminal 3-CCA end of the tRNA. Hydroxylation of the C5 position on Lys-34 may allow additional potential stabilizing hydrogen-bond interactions with the P-tRNA.

It is found in the cytoplasm. Its pathway is protein biosynthesis; polypeptide chain elongation. Its function is as follows. Involved in peptide bond synthesis. Alleviates ribosome stalling that occurs when 3 or more consecutive Pro residues or the sequence PPG is present in a protein, possibly by augmenting the peptidyl transferase activity of the ribosome. Modification of Lys-34 is required for alleviation. The sequence is that of Elongation factor P from Alcanivorax borkumensis (strain ATCC 700651 / DSM 11573 / NCIMB 13689 / SK2).